A 257-amino-acid polypeptide reads, in one-letter code: UPF0246 protein Rsph17029_0026 (257 aa).

Belongs to the UPF0246 family.

This chain is UPF0246 protein Rsph17029_0026, found in Cereibacter sphaeroides (strain ATCC 17029 / ATH 2.4.9) (Rhodobacter sphaeroides).